A 1051-amino-acid chain; its full sequence is SWI/SNF-related matrix-associated actin-dependent regulator of chromatin subfamily A member 5 (1051 aa).

Residues M1 to S15 are compositionally biased toward pro residues. A disordered region spans residues M1–E81. N-acetylserine is present on S2. Residues G24–G38 show a composition bias toward gly residues. Residues G39–A53 show a composition bias toward low complexity. T55 is modified (phosphothreonine). A Phosphoserine modification is found at S65. Residues K68 to E81 are compositionally biased toward basic and acidic residues. K82 is covalently cross-linked (Glycyl lysine isopeptide (Lys-Gly) (interchain with G-Cter in SUMO2)). T112 is subject to Phosphothreonine. Residues S115, S136, and S170 each carry the phosphoserine modification. The Helicase ATP-binding domain maps to I191–D356. D204–T211 lines the ATP pocket. The DEAH box motif lies at D307–H310. The residue at position 439 (K439) is an N6-acetyllysine. The region spanning V486–V637 is the Helicase C-terminal domain. Glycyl lysine isopeptide (Lys-Gly) (interchain with G-Cter in SUMO2) cross-links involve residues K643, K646, K693, K721, and K734. S754 is subject to Phosphoserine. SANT domains lie at Q839 to N891 and K942 to L1006. K965 is covalently cross-linked (Glycyl lysine isopeptide (Lys-Gly) (interchain with G-Cter in SUMO2)). Positions L1014 to L1051 are disordered. Positions K1022–K1033 are enriched in basic residues. Positions R1034–R1043 are enriched in basic and acidic residues.

Belongs to the SNF2/RAD54 helicase family. ISWI subfamily. Component of the ACF-5 ISWI chromatin-remodeling complex (also called the ACF/WCRF complex) at least composed of SMARCA5/SNF2H and BAZ1A/ACF1, which regulates the spacing of histone octamers on the DNA template to facilitate access to DNA. Within the complex interacts with BAZ1A/ACF1; the interaction is direct and is required to slide nucleosomes from end to center positions on a DNA template in an ATP-dependent manner. Component of the CHRAC ISWI chromatin-remodeling complex at least composed of SMARCA5/SNF2H, BAZ1A/ACF1, CHRAC1 and POLE3; the complex preferentially binds DNA through the CHRAC1-POLE3 heterodimer and possesses ATP-dependent nucleosome-remodeling activity. Within the complex interacts with BAZ1A/ACF1; the interaction is direct and promotes the interaction with the POLE3-CHRAC1 heterodimer. Within the complex interacts with the POLE3-CHRAC1 heterodimer; the interaction is direct and enhances nucleosome sliding activity by the SMARCA5/SNF2H and BAZ1A/ACF1 interaction. Neither POLE3 nor CHRAC1 enhances nucleosome sliding activity of the ACF-5 ISWI chromatin remodeling complex. Component of the WICH-5 ISWI chromatin-remodeling complex (also called the WICH complex) at least composed of SMARCA5/SNF2H and BAZ1B/WSTF, which regulates the spacing of histone octamers on the DNA template to facilitate access to DNA. Within the complex interacts with BAZ1B/WSTF. Component of the NoRC-5 ISWI chromatin-remodeling complex (also called the NoRC chromatin-remodeling complex) at least composed of SMARCA5/SNF2H and BAZ2A/TIP5; the complex suppresses rDNA transcription by a combination of nucleosome remodeling, histone deacetylation, and DNA methylation. Within the complex interacts with BAZ2A/TIP5. Within the complex interacts with HDAC1. Component of the BRF-5 ISWI chromatin-remodeling complex at least composed of SMARCA5/SNF2H and BAZ2B. Within the complex interacts with BAZ2B. Component of the NURF-5 ISWI chromatin-remodeling complex at least composed of SMARCA5/SNF2H and BPTF. Within the complex interacts with BPFT. Component of the CERF-5 ISWI chromatin-remodeling complex at least composed of SMARCA5/SNF2H and CECR2. LUZP1 is detected as part of the CERF-5 complex in embryonic stem cells where it is involved in complex stabilization but is not detected in the complex in the testis. Component of the RSF-5 ISWI chromatin-remodeling complex (also called the RSF complex) at least composed of SMARCA5/SNF2H and RSF1. Within the complex interacts with RSF1. Interacts with the cohesin complex component RAD21; the interaction is direct. Interacts with the NuRD complex components HDAC2, RBBP4 and CHD4; the interactions are direct. Interacts with PCNA. Component of the B-WICH complex, at least composed of SMARCA5/SNF2H, BAZ1B/WSTF, SF3B1, DEK, MYO1C, ERCC6, MYBBP1A and DDX21 which positively regulates RNA polymerase III transcription. Interacts with MYO1C. Interacts with BEND3. Interacts with SIRT6; promoting recruitment to DNA damage sites. As to expression, ubiquitously expressed.

Its subcellular location is the nucleus. It localises to the chromosome. It carries out the reaction ATP + H2O = ADP + phosphate + H(+). Functionally, ATPase that possesses intrinsic ATP-dependent nucleosome-remodeling activity. Catalytic subunit of ISWI chromatin-remodeling complexes, which form ordered nucleosome arrays on chromatin and facilitate access to DNA during DNA-templated processes such as DNA replication, transcription, and repair; this may require intact histone H4 tails. Within the ISWI chromatin-remodeling complexes, slides edge- and center-positioned histone octamers away from their original location on the DNA template. Catalytic activity and histone octamer sliding propensity is regulated and determined by components of the ISWI chromatin-remodeling complexes. The BAZ1A/ACF1-, BAZ1B/WSTF-, BAZ2A/TIP5- and BAZ2B-containing ISWI chromatin-remodeling complexes regulate the spacing of nucleosomes along the chromatin and have the ability to slide mononucleosomes to the center of a DNA template in an ATP-dependent manner. The CECR2- and RSF1-containing ISWI chromatin-remodeling complexes do not have the ability to slide mononucleosomes to the center of a DNA template. Binds to core histones together with RSF1, and is required for the assembly of regular nucleosome arrays by the RSF-5 ISWI chromatin-remodeling complex. Involved in DNA replication and together with BAZ1A/ACF1 is required for replication of pericentric heterochromatin in S-phase. Probably plays a role in repression of RNA polymerase I dependent transcription of the rDNA locus, through the recruitment of the SIN3/HDAC1 corepressor complex to the rDNA promoter. The WICH-5 ISWI chromatin-remodeling complex regulates the transcription of various genes, has a role in RNA polymerase I and RNA polymerase III transcription, mediates the histone H2AX phosphorylation at 'Tyr-142', and is involved in the maintenance of chromatin structures during DNA replication processes. Essential component of the NoRC-5 ISWI chromatin-remodeling complex, a complex that mediates silencing of a fraction of rDNA by recruiting histone-modifying enzymes and DNA methyltransferases, leading to heterochromatin formation and transcriptional silencing. Required for embryonic development and differentiation, and the proliferation of early blastocyst-derived stem cells. In Mus musculus (Mouse), this protein is SWI/SNF-related matrix-associated actin-dependent regulator of chromatin subfamily A member 5 (Smarca5).